The chain runs to 374 residues: Heptahelical transmembrane protein 5 (374 aa).

The Cytoplasmic portion of the chain corresponds to 1 to 79 (MGDEAEIKEH…LSIFTIHNET (79 aa)). A helical membrane pass occupies residues 80 to 100 (LNVWTHLIGFFLFLALTIYTA). The Extracellular segment spans residues 101-191 (TKVPSVVDLH…LIFRPITRWP (91 aa)). The helical transmembrane segment at 192–212 (FYAFLGGAIFCLLASSTCHLL) threads the bilayer. Residues 213-228 (SCHSERVSYIMLRLDY) lie on the Cytoplasmic side of the membrane. Residues 229-249 (AGIAALIATSFYPPVYYSFMC) form a helical membrane-spanning segment. Topologically, residues 250–256 (DPFFCNL) are extracellular. A helical membrane pass occupies residues 257–277 (YLGFITILGIATVLVSLLPVF). Residues 278–288 (QSLEFRVVRAS) lie on the Cytoplasmic side of the membrane. Residues 289-309 (LFFGMGFSGLAPILHKLIIFW) traverse the membrane as a helical segment. At 310–313 (DQPE) the chain is on the extracellular side. Residues 314–334 (ALHMTGYEILMGLLYGLGAVV) form a helical membrane-spanning segment. The Cytoplasmic segment spans residues 335–347 (YATRIPERWMPGK). Residues 348 to 368 (FDIAGHSHQLFHVLVVAGALT) form a helical membrane-spanning segment. Over 369–374 (HYRAGL) the chain is Extracellular.

It belongs to the ADIPOR family. Expressed in roots, leaves, stems and flowers.

It localises to the membrane. Its function is as follows. May play a role in abiotic stress response. In Arabidopsis thaliana (Mouse-ear cress), this protein is Heptahelical transmembrane protein 5 (HHP5).